Consider the following 318-residue polypeptide: MSVDQTLYSRARAAMADPTCAGPATFTAAGAFSQPDLMAFSLPEEEPIWGFDTIAPSMASWQGKMEQQTFCNPNMERGLKNTHVRNGQPTPPPFDDKKLQTPMGEMYPVAQYAFNSSPPEYAPPKHRSSLSEQSQTDGYGVSTRRRKASAVDQSEQQQDREKREKFLERNRLAASKCRQKKKEHTKLLETRFREVSSKKGELESEIEHLRSEVLNLKNEMLRHAQCGDEAIKIHLAQMVRLITSKDTPNRDLVSPMRSPEQMTASTPHGLSFGFDGPMQLPSEMGSPLDQRRDSEQSIMTESSYTFSTDDSFEELINV.

2 disordered regions span residues 79–100 (LKNT…KKLQ) and 114–164 (FNSS…EKRE). A basic motif region spans residues 160 to 199 (REKREKFLERNRLAASKCRQKKKEHTKLLETRFREVSSKK). Positions 160-223 (REKREKFLER…LNLKNEMLRH (64 aa)) constitute a bZIP domain. A leucine-zipper region spans residues 202–216 (LESEIEHLRSEVLNL). Residues 247–304 (TPNRDLVSPMRSPEQMTASTPHGLSFGFDGPMQLPSEMGSPLDQRRDSEQSIMTESSY) form a disordered region.

The protein belongs to the bZIP family. ATF subfamily.

It is found in the nucleus. Functionally, transcription factor that acts as a key player in the regulatory circuit that integrates secondary metabolism and cellular response to oxidative stress. Regulates the genes involved in development, stress response, and secondary metabolism through direct binding to their promoters. Particularly involved in the resistance to oxidative stress in asexual conidiospores. Binds aflatoxin gene promoters carrying the cAMP-response element (CRE1) under aflatoxin-inducing conditions. This Aspergillus parasiticus (strain ATCC 56775 / NRRL 5862 / SRRC 143 / SU-1) protein is Basic leucine zipper (bZIP) transcription factor atfB.